The chain runs to 212 residues: Glycerol-3-phosphate acyltransferase (212 aa).

Helical transmembrane passes span 10–30, 90–110, 124–144, 150–170, and 171–191; these read FAAL…AVVV, GYGL…SLGF, FAVS…VAVV, LAAL…GGTI, and WPLN…LFYR.

This sequence belongs to the PlsY family. Probably interacts with PlsX.

Its subcellular location is the cell inner membrane. It catalyses the reaction an acyl phosphate + sn-glycerol 3-phosphate = a 1-acyl-sn-glycero-3-phosphate + phosphate. It participates in lipid metabolism; phospholipid metabolism. In terms of biological role, catalyzes the transfer of an acyl group from acyl-phosphate (acyl-PO(4)) to glycerol-3-phosphate (G3P) to form lysophosphatidic acid (LPA). This enzyme utilizes acyl-phosphate as fatty acyl donor, but not acyl-CoA or acyl-ACP. The sequence is that of Glycerol-3-phosphate acyltransferase from Bordetella avium (strain 197N).